We begin with the raw amino-acid sequence, 627 residues long: Serine/threonine-protein kinase Nek5 (627 aa).

The Protein kinase domain occupies 4–255 (FHLIKIIGEG…VTSLLKRPFL (252 aa)). Residues 10 to 18 (IGEGTFGKV) and lysine 33 each bind ATP. Aspartate 124 acts as the Proton acceptor in catalysis. Acidic residues predominate over residues 563–580 (QLEPGSDEDDIKFEESED). Disordered stretches follow at residues 563–582 (QLEPGSDEDDIKFEESEDEL) and 591–627 (EKLAASTEEAEQAPSSSKNAEEPGEKEKTNLPVKKLQ). The span at 609–619 (NAEEPGEKEKT) shows a compositional bias: basic and acidic residues.

Belongs to the protein kinase superfamily. NEK Ser/Thr protein kinase family. NIMA subfamily. The cofactor is Mg(2+).

It localises to the cell projection. The protein resides in the cilium. It is found in the flagellum. It catalyses the reaction L-seryl-[protein] + ATP = O-phospho-L-seryl-[protein] + ADP + H(+). The catalysed reaction is L-threonyl-[protein] + ATP = O-phospho-L-threonyl-[protein] + ADP + H(+). This is Serine/threonine-protein kinase Nek5 (Nek5) from Mus musculus (Mouse).